The following is a 635-amino-acid chain: Threonine--tRNA ligase (635 aa).

In terms of domain architecture, TGS spans 1–61 (MIKITLKDGS…KEDAALELLT (61 aa)). The catalytic stretch occupies residues 242–532 (DHRKLGQELD…LTEHFAGAFP (291 aa)). 3 residues coordinate Zn(2+): cysteine 333, histidine 384, and histidine 509.

This sequence belongs to the class-II aminoacyl-tRNA synthetase family. Homodimer. The cofactor is Zn(2+).

It is found in the cytoplasm. The catalysed reaction is tRNA(Thr) + L-threonine + ATP = L-threonyl-tRNA(Thr) + AMP + diphosphate + H(+). In terms of biological role, catalyzes the attachment of threonine to tRNA(Thr) in a two-step reaction: L-threonine is first activated by ATP to form Thr-AMP and then transferred to the acceptor end of tRNA(Thr). Also edits incorrectly charged L-seryl-tRNA(Thr). The chain is Threonine--tRNA ligase from Desulforamulus reducens (strain ATCC BAA-1160 / DSM 100696 / MI-1) (Desulfotomaculum reducens).